Reading from the N-terminus, the 135-residue chain is NAD(P)H-quinone oxidoreductase subunit 3 (135 aa).

The next 3 membrane-spanning stretches (helical) occupy residues 15–35, 79–99, and 104–124; these read IVFF…SSLV, MFAL…PWAV, and LGLL…VALV.

It belongs to the complex I subunit 3 family. In terms of assembly, NDH-1 can be composed of about 15 different subunits; different subcomplexes with different compositions have been identified which probably have different functions.

The protein resides in the cellular thylakoid membrane. The enzyme catalyses a plastoquinone + NADH + (n+1) H(+)(in) = a plastoquinol + NAD(+) + n H(+)(out). The catalysed reaction is a plastoquinone + NADPH + (n+1) H(+)(in) = a plastoquinol + NADP(+) + n H(+)(out). Functionally, NDH-1 shuttles electrons from an unknown electron donor, via FMN and iron-sulfur (Fe-S) centers, to quinones in the respiratory and/or the photosynthetic chain. The immediate electron acceptor for the enzyme in this species is believed to be plastoquinone. Couples the redox reaction to proton translocation, and thus conserves the redox energy in a proton gradient. Cyanobacterial NDH-1 also plays a role in inorganic carbon-concentration. This is NAD(P)H-quinone oxidoreductase subunit 3 from Trichodesmium erythraeum (strain IMS101).